Reading from the N-terminus, the 470-residue chain is Siroheme synthase 2 (470 aa).

The precorrin-2 dehydrogenase /sirohydrochlorin ferrochelatase stretch occupies residues 1–202; sequence MDYLPMFAKL…EDWQGAEQWL (202 aa). NAD(+)-binding positions include 22 to 23 and 43 to 44; these read EV and PE. The residue at position 126 (Ser-126) is a Phosphoserine. Residues 214–470 form a uroporphyrinogen-III C-methyltransferase region; the sequence is GEVVLVGAGP…TCDLKLVSLA (257 aa). Pro-223 is a binding site for S-adenosyl-L-methionine. Asp-246 (proton acceptor) is an active-site residue. Catalysis depends on Lys-268, which acts as the Proton donor. Residues 299–301, 329–330, Met-381, and Gly-410 each bind S-adenosyl-L-methionine; these read GGD and TA.

This sequence in the N-terminal section; belongs to the precorrin-2 dehydrogenase / sirohydrochlorin ferrochelatase family. The protein in the C-terminal section; belongs to the precorrin methyltransferase family.

It catalyses the reaction uroporphyrinogen III + 2 S-adenosyl-L-methionine = precorrin-2 + 2 S-adenosyl-L-homocysteine + H(+). The enzyme catalyses precorrin-2 + NAD(+) = sirohydrochlorin + NADH + 2 H(+). The catalysed reaction is siroheme + 2 H(+) = sirohydrochlorin + Fe(2+). Its pathway is cofactor biosynthesis; adenosylcobalamin biosynthesis; precorrin-2 from uroporphyrinogen III: step 1/1. It participates in cofactor biosynthesis; adenosylcobalamin biosynthesis; sirohydrochlorin from precorrin-2: step 1/1. It functions in the pathway porphyrin-containing compound metabolism; siroheme biosynthesis; precorrin-2 from uroporphyrinogen III: step 1/1. The protein operates within porphyrin-containing compound metabolism; siroheme biosynthesis; siroheme from sirohydrochlorin: step 1/1. Its pathway is porphyrin-containing compound metabolism; siroheme biosynthesis; sirohydrochlorin from precorrin-2: step 1/1. Multifunctional enzyme that catalyzes the SAM-dependent methylations of uroporphyrinogen III at position C-2 and C-7 to form precorrin-2 via precorrin-1. Then it catalyzes the NAD-dependent ring dehydrogenation of precorrin-2 to yield sirohydrochlorin. Finally, it catalyzes the ferrochelation of sirohydrochlorin to yield siroheme. The polypeptide is Siroheme synthase 2 (Aeromonas hydrophila subsp. hydrophila (strain ATCC 7966 / DSM 30187 / BCRC 13018 / CCUG 14551 / JCM 1027 / KCTC 2358 / NCIMB 9240 / NCTC 8049)).